We begin with the raw amino-acid sequence, 367 residues long: tRNA-specific 2-thiouridylase MnmA (367 aa).

ATP is bound by residues 12-19 (GMSGGVDS) and M38. The interval 98–100 (NPD) is interaction with target base in tRNA. Residue C103 is the Nucleophile of the active site. C103 and C200 are disulfide-bonded. G128 contributes to the ATP binding site. The interaction with tRNA stretch occupies residues 150 to 152 (KDQ). C200 (cysteine persulfide intermediate) is an active-site residue. Positions 312 to 313 (RY) are interaction with tRNA.

The protein belongs to the MnmA/TRMU family. Interacts with TusE.

The protein localises to the cytoplasm. The enzyme catalyses S-sulfanyl-L-cysteinyl-[protein] + uridine(34) in tRNA + AH2 + ATP = 2-thiouridine(34) in tRNA + L-cysteinyl-[protein] + A + AMP + diphosphate + H(+). Catalyzes the 2-thiolation of uridine at the wobble position (U34) of tRNA(Lys), tRNA(Glu) and tRNA(Gln), leading to the formation of s(2)U34, the first step of tRNA-mnm(5)s(2)U34 synthesis. Sulfur is provided by IscS, via a sulfur-relay system. Binds ATP and its substrate tRNAs. This chain is tRNA-specific 2-thiouridylase MnmA, found in Photorhabdus laumondii subsp. laumondii (strain DSM 15139 / CIP 105565 / TT01) (Photorhabdus luminescens subsp. laumondii).